A 341-amino-acid polypeptide reads, in one-letter code: THO complex subunit 6 (341 aa).

WD repeat units lie at residues 22–61 (RLHM…SSEA), 74–112 (AHDG…GCKE), 124–165 (LEVP…RVLR), 166–205 (GHTD…EVQT), 215–254 (SRPH…PTTI), 256–293 (PIRA…KAQV), and 295–339 (GSSP…AFSL). S180 is subject to Phosphoserine.

Belongs to the WD repeat THOC6 family. In terms of assembly, component of the THO subcomplex, which is composed of THOC1, THOC2, THOC3, THOC5, THOC6 and THOC7. The THO subcomplex interacts with DDX39B to form the THO-DDX39B complex which multimerizes into a 28-subunit tetrameric assembly. Component of the transcription/export (TREX) complex at least composed of ALYREF/THOC4, DDX39B, SARNP/CIP29, CHTOP and the THO subcomplex; in the complex interacts with THOC5; together with THOC5 and THOC7, plays a key structural role in the oligomerization of the THO-DDX39B complex. TREX seems to have a dynamic structure involving ATP-dependent remodeling.

The protein resides in the nucleus. Its subcellular location is the nucleus speckle. Its function is as follows. Component of the THO subcomplex of the TREX complex which is thought to couple mRNA transcription, processing and nuclear export, and which specifically associates with spliced mRNA and not with unspliced pre-mRNA. Plays a key structural role in the oligomerization of the THO-DDX39B complex. TREX is recruited to spliced mRNAs by a transcription-independent mechanism, binds to mRNA upstream of the exon-junction complex (EJC) and is recruited in a splicing- and cap-dependent manner to a region near the 5' end of the mRNA where it functions in mRNA export to the cytoplasm via the TAP/NXF1 pathway. Plays a role in apoptosis negative control involved in brain development. In terms of biological role, (Microbial infection) The TREX complex is essential for the export of Kaposi's sarcoma-associated herpesvirus (KSHV) intronless mRNAs and infectious virus production. The protein is THO complex subunit 6 (THOC6) of Homo sapiens (Human).